The chain runs to 211 residues: Uracil phosphoribosyltransferase (211 aa).

5-phospho-alpha-D-ribose 1-diphosphate contacts are provided by residues arginine 79, arginine 104, and 131-139 (DPMLATGGS). Uracil contacts are provided by residues isoleucine 196 and 201-203 (GDA). Position 202 (aspartate 202) interacts with 5-phospho-alpha-D-ribose 1-diphosphate.

Belongs to the UPRTase family. Requires Mg(2+) as cofactor.

It catalyses the reaction UMP + diphosphate = 5-phospho-alpha-D-ribose 1-diphosphate + uracil. Its pathway is pyrimidine metabolism; UMP biosynthesis via salvage pathway; UMP from uracil: step 1/1. With respect to regulation, allosterically activated by GTP. Catalyzes the conversion of uracil and 5-phospho-alpha-D-ribose 1-diphosphate (PRPP) to UMP and diphosphate. The sequence is that of Uracil phosphoribosyltransferase from Lactococcus lactis subsp. cremoris (strain MG1363).